A 241-amino-acid polypeptide reads, in one-letter code: Proteasome subunit alpha type-5 (241 aa).

It belongs to the peptidase T1A family. In terms of assembly, the 26S proteasome consists of a 20S proteasome core and two 19S regulatory subunits. The 20S proteasome core is composed of 28 subunits that are arranged in four stacked rings, resulting in a barrel-shaped structure. The two end rings are each formed by seven alpha subunits, and the two central rings are each formed by seven beta subunits. The catalytic chamber with the active sites is on the inside of the barrel.

It localises to the cytoplasm. The protein resides in the nucleus. The proteasome is a multicatalytic proteinase complex which is characterized by its ability to cleave peptides with Arg, Phe, Tyr, Leu, and Glu adjacent to the leaving group at neutral or slightly basic pH. The proteasome has an ATP-dependent proteolytic activity. The polypeptide is Proteasome subunit alpha type-5 (psmA5) (Dictyostelium discoideum (Social amoeba)).